The chain runs to 280 residues: Pantothenate synthetase (280 aa).

Residue 30–37 (MGYLHEGH) coordinates ATP. His-37 acts as the Proton donor in catalysis. (R)-pantoate is bound at residue Gln-61. Gln-61 lines the beta-alanine pocket. 147-150 (GQKD) is a binding site for ATP. A (R)-pantoate-binding site is contributed by Gln-153. ATP is bound by residues Val-176 and 184–187 (MSSR).

The protein belongs to the pantothenate synthetase family. As to quaternary structure, homodimer.

Its subcellular location is the cytoplasm. It catalyses the reaction (R)-pantoate + beta-alanine + ATP = (R)-pantothenate + AMP + diphosphate + H(+). It functions in the pathway cofactor biosynthesis; (R)-pantothenate biosynthesis; (R)-pantothenate from (R)-pantoate and beta-alanine: step 1/1. In terms of biological role, catalyzes the condensation of pantoate with beta-alanine in an ATP-dependent reaction via a pantoyl-adenylate intermediate. This is Pantothenate synthetase from Thermotoga neapolitana.